Consider the following 100-residue polypeptide: Replication restart protein PriB (100 aa).

The SSB domain maps to 1-99; the sequence is MGFNNLVSLA…LRIQNIQEYK (99 aa).

The protein belongs to the PriB family. Homodimer. Interacts with PriA and DnaT. Component of the replication restart primosome. Primosome assembly occurs via a 'hand-off' mechanism. PriA binds to replication forks, subsequently PriB then DnaT bind; DnaT then displaces ssDNA to generate the helicase loading substrate.

Its function is as follows. Involved in the restart of stalled replication forks, which reloads the replicative helicase on sites other than the origin of replication; the PriA-PriB pathway is the major replication restart pathway. During primosome assembly it facilitates complex formation between PriA and DnaT on DNA; stabilizes PriA on DNA. Stimulates the DNA unwinding activity of PriA helicase. The protein is Replication restart protein PriB of Neisseria meningitidis serogroup A / serotype 4A (strain DSM 15465 / Z2491).